A 692-amino-acid chain; its full sequence is UvrABC system protein B (692 aa).

Positions E32 to F187 constitute a Helicase ATP-binding domain. G45–T52 contributes to the ATP binding site. A Beta-hairpin motif is present at residues Y98–V121. The region spanning Q436–I631 is the Helicase C-terminal domain. Residues K656–M691 form the UVR domain.

This sequence belongs to the UvrB family. Forms a heterotetramer with UvrA during the search for lesions. Interacts with UvrC in an incision complex.

It localises to the cytoplasm. Functionally, the UvrABC repair system catalyzes the recognition and processing of DNA lesions. A damage recognition complex composed of 2 UvrA and 2 UvrB subunits scans DNA for abnormalities. Upon binding of the UvrA(2)B(2) complex to a putative damaged site, the DNA wraps around one UvrB monomer. DNA wrap is dependent on ATP binding by UvrB and probably causes local melting of the DNA helix, facilitating insertion of UvrB beta-hairpin between the DNA strands. Then UvrB probes one DNA strand for the presence of a lesion. If a lesion is found the UvrA subunits dissociate and the UvrB-DNA preincision complex is formed. This complex is subsequently bound by UvrC and the second UvrB is released. If no lesion is found, the DNA wraps around the other UvrB subunit that will check the other stand for damage. In Lactococcus lactis subsp. cremoris (strain MG1363), this protein is UvrABC system protein B.